We begin with the raw amino-acid sequence, 90 residues long: Putative Fis-like DNA-binding protein (90 aa).

The H-T-H motif DNA-binding region spans 66 to 85; sequence QSRAAALLGIHRATLRKKLK.

Belongs to the transcriptional regulatory Fis family.

This is Putative Fis-like DNA-binding protein from Xylella fastidiosa (strain Temecula1 / ATCC 700964).